The primary structure comprises 678 residues: Methionine--tRNA ligase (678 aa).

The 'HIGH' region signature appears at 14 to 24; it reads PYANGSIHLGH. 4 residues coordinate Zn(2+): C145, C148, C158, and C161. Residues 331 to 335 carry the 'KMSKS' region motif; it reads KMSKS. K334 is a binding site for ATP. The tRNA-binding domain occupies 576 to 678; that stretch reads AFAAVDLRIA…SGAKPGQRVK (103 aa).

The protein belongs to the class-I aminoacyl-tRNA synthetase family. MetG type 1 subfamily. Homodimer. It depends on Zn(2+) as a cofactor.

The protein resides in the cytoplasm. The catalysed reaction is tRNA(Met) + L-methionine + ATP = L-methionyl-tRNA(Met) + AMP + diphosphate. Is required not only for elongation of protein synthesis but also for the initiation of all mRNA translation through initiator tRNA(fMet) aminoacylation. This Ectopseudomonas mendocina (strain ymp) (Pseudomonas mendocina) protein is Methionine--tRNA ligase.